The primary structure comprises 335 residues: 3-ketodihydrosphingosine reductase TSC10 (335 aa).

The NADPH site is built by Gly-42, Ser-44, Ser-45, and Gly-46. A GXSXG motif is present at residues 42–46; sequence GGSSG. An NADP(+)-binding site is contributed by Leu-47. 5 residues coordinate NADPH: Arg-67, Asp-68, Lys-71, Asp-95, and Leu-96. Asp-95 contributes to the NADP(+) binding site. NADP(+)-binding residues include Tyr-190, Lys-194, and Ile-223. The Proton acceptor role is filled by Tyr-190. Lys-194 (lowers pKa of active site Tyr) is an active-site residue. Residues 288–308 traverse the membrane as a helical segment; the sequence is TNNFLLDTLWLIVSSVGVPIW.

The protein belongs to the short-chain dehydrogenases/reductases (SDR) family.

The protein localises to the endoplasmic reticulum membrane. It catalyses the reaction sphinganine + NADP(+) = 3-oxosphinganine + NADPH + H(+). Its pathway is lipid metabolism; sphingolipid metabolism. In terms of biological role, catalyzes the reduction of 3'-oxosphinganine (3-ketodihydrosphingosine/KDS) to sphinganine (dihydrosphingosine/DHS), the second step of de novo sphingolipid biosynthesis. This is 3-ketodihydrosphingosine reductase TSC10 (TSC10) from Cryptococcus neoformans var. neoformans serotype D (strain B-3501A) (Filobasidiella neoformans).